The primary structure comprises 487 residues: GTPase Der (487 aa).

The 165-residue stretch at Leu2–Glu166 folds into the EngA-type G 1 domain. GTP-binding positions include Gly8–Ser15, Asp55–Val59, and Asn118–Asp121. Positions Pro165 to Thr194 are disordered. Acidic residues predominate over residues Arg168 to Glu187. One can recognise an EngA-type G 2 domain in the interval Leu225–Ser398. GTP contacts are provided by residues Gly231 to Ser238, Asp278 to Leu282, and Asn343 to Asp346. In terms of domain architecture, KH-like spans Asn399–Pro483.

The protein belongs to the TRAFAC class TrmE-Era-EngA-EngB-Septin-like GTPase superfamily. EngA (Der) GTPase family. Associates with the 50S ribosomal subunit.

GTPase that plays an essential role in the late steps of ribosome biogenesis. The polypeptide is GTPase Der (Chlamydia pneumoniae (Chlamydophila pneumoniae)).